The sequence spans 148 residues: Transcriptional repressor NrdR (148 aa).

The interval methionine 1 to glycine 22 is disordered. Residues cysteine 3 to cysteine 34 fold into a zinc finger. An ATP-cone domain is found at leucine 49–arginine 136.

The protein belongs to the NrdR family. Zn(2+) is required as a cofactor.

Negatively regulates transcription of bacterial ribonucleotide reductase nrd genes and operons by binding to NrdR-boxes. This Deinococcus deserti (strain DSM 17065 / CIP 109153 / LMG 22923 / VCD115) protein is Transcriptional repressor NrdR.